Consider the following 142-residue polypeptide: Hemoglobin subunit alpha (142 aa).

At Ser-1 the chain carries N-acetylserine. The 142-residue stretch at 1–142 (SLSDKDKAVV…LALALSEKYR (142 aa)) folds into the Globin domain. Position 59 (His-59) interacts with O2. His-88 is a binding site for heme b.

Belongs to the globin family. Heterotetramer of two alpha chains and two beta chains. Red blood cells.

In terms of biological role, involved in oxygen transport from gills to the various peripheral tissues. The polypeptide is Hemoglobin subunit alpha (hba) (Carassius auratus (Goldfish)).